The sequence spans 342 residues: D-alanine--D-alanine ligase (342 aa).

One can recognise an ATP-grasp domain in the interval Lys132 to Asn326. An ATP-binding site is contributed by Glu159–Tyr210. Asp282, Glu294, and Asn296 together coordinate Mg(2+).

Belongs to the D-alanine--D-alanine ligase family. The cofactor is Mg(2+). Requires Mn(2+) as cofactor.

Its subcellular location is the cytoplasm. It catalyses the reaction 2 D-alanine + ATP = D-alanyl-D-alanine + ADP + phosphate + H(+). The protein operates within cell wall biogenesis; peptidoglycan biosynthesis. In terms of biological role, cell wall formation. The chain is D-alanine--D-alanine ligase from Nitratiruptor sp. (strain SB155-2).